A 160-amino-acid chain; its full sequence is Prostaglandin E synthase 3 (160 aa).

In terms of domain architecture, CS spans 1–90 (MQPASAKWYD…ESGQSWPRLT (90 aa)). Residue lysine 33 is modified to N6-acetyllysine. Lysine 35 participates in a covalent cross-link: Glycyl lysine isopeptide (Lys-Gly) (interchain with G-Cter in SUMO2). Serine 44 is modified (phosphoserine). A Glycyl lysine isopeptide (Lys-Gly) (interchain with G-Cter in SUMO2) cross-link involves residue lysine 65. 6 positions are modified to phosphoserine: serine 85, serine 100, serine 113, serine 118, serine 148, and serine 151. The segment at 124-160 (SEMMNNMGGDEDVDLPEVDGADDDSQDSDDEKMPDLE) is disordered. The segment covering 132–153 (GDEDVDLPEVDGADDDSQDSDD) has biased composition (acidic residues). The short motif at 157–160 (PDLE) is the PXLE motif element.

The protein belongs to the p23/wos2 family. As to quaternary structure, probably forms a complex composed of chaperones HSP90 and HSP70, co-chaperones STIP1/HOP, CDC37, PPP5C, PTGES3/p23, TSC1 and client protein TSC2. Binds to the progesterone receptor. Interacts with TERT; the interaction, together with HSP90AA1, is required for correct assembly and stabilization of the telomerase holoenzyme complex. Interacts (via PXLE motif) with EGLN1/PHD2, recruiting EGLN1/PHD2 to the HSP90 pathway to facilitate HIF alpha proteins hydroxylation. Interacts with HSP90AA1, FLCN, FNIP1 and FNIP2. In terms of processing, proteolytically cleaved by caspase-7 (CASP7) in response to apoptosis, leading to its inactivation. As to expression, detected in testis and ovary, at lower levels in endometrium, myometrium, kidney and lung, and only faintly in spleen, heart and muscle (at protein level). Expressed at high levels in glandular and luminal epithelial cells of the endometrium, but also detected in stromal cells (at protein level).

The protein resides in the cytoplasm. The enzyme catalyses prostaglandin H2 = prostaglandin E2. Its pathway is lipid metabolism; prostaglandin biosynthesis. Cytosolic prostaglandin synthase that catalyzes the oxidoreduction of prostaglandin endoperoxide H2 (PGH2) to prostaglandin E2 (PGE2). Molecular chaperone that localizes to genomic response elements in a hormone-dependent manner and disrupts receptor-mediated transcriptional activation, by promoting disassembly of transcriptional regulatory complexes. Facilitates HIF alpha proteins hydroxylation via interaction with EGLN1/PHD2, leading to recruit EGLN1/PHD2 to the HSP90 pathway. The chain is Prostaglandin E synthase 3 (PTGES3) from Bos taurus (Bovine).